The primary structure comprises 331 residues: Serine racemase (331 aa).

ATP-binding residues include Ser34 and Lys54. The Proton acceptor role is filled by Lys59. Lys59 bears the N6-(pyridoxal phosphate)lysine mark. Thr81 is a Ca(2+) binding site. The Proton acceptor role is filled by Ser84. Asn86 contacts pyridoxal 5'-phosphate. Tyr121 provides a ligand contact to ATP. Residue Asp178 participates in Mg(2+) binding. Pyridoxal 5'-phosphate is bound by residues Gly186, Gly187, and Gly188. 3 residues coordinate Ca(2+): Glu210, Ala214, and Asp216. Mg(2+) is bound by residues Glu210, Ala214, and Asp216. Mn(2+) is bound by residues Glu210, Ala214, and Asp216. Position 278 (Lys278) interacts with ATP. Residue Ser314 coordinates pyridoxal 5'-phosphate. Asn317 is a binding site for ATP.

Belongs to the serine/threonine dehydratase family. As to quaternary structure, homodimer. Requires Mg(2+) as cofactor. The cofactor is Mn(2+). Ca(2+) is required as a cofactor. It depends on pyridoxal 5'-phosphate as a cofactor. In terms of tissue distribution, expressed in the whole plant.

The enzyme catalyses L-serine = D-serine. The catalysed reaction is L-serine = pyruvate + NH4(+). It catalyses the reaction D-serine = pyruvate + NH4(+). Inhibited by hydroxylamine. Racemase activity is enhanced by Ca(2+), Mg(2+), Mn(2+), and is decreased by Ni(2+), Zn(2+). Hydratase activity is enhanced by Ca(2+), Mg(2+), Mn(2+), Cu(2+), Fe(2+), Ni(2+). In terms of biological role, catalyzes the synthesis of D-serine from L-serine. Has dehydratase activity towards both L-serine and D-serine. Displays high substrate specificity for L-serine, whereas L-alanine, L-arginine, and L-glutamine were poor substrates. The sequence is that of Serine racemase (SR) from Arabidopsis thaliana (Mouse-ear cress).